The following is a 58-amino-acid chain: Metallothionein (58 aa).

Residues 1-29 (MPGPCCNDVCECAAGGCKTGCVCTSCRCS) are beta. Positions 5, 6, 10, 12, 17, 21, 23, 26, 28, 31, 34, 38, 40, 46, 50, 54, 56, and 57 each coordinate a divalent metal cation. Residues 30–58 (PCDKCTSGCKCPSKEECAKTCSKPCECCP) are alpha.

In terms of biological role, metallothioneins have a high content of cysteine residues that bind various heavy metals. Class I MTS in crustacea are involved in the sequestration of elevated levels of heavy-metal ions. This is Metallothionein from Astacus astacus (Noble crayfish).